A 357-amino-acid polypeptide reads, in one-letter code: RNA 3'-terminal phosphate cyclase (357 aa).

Residues glutamine 102 and histidine 293–aspartate 296 contribute to the ATP site. The Tele-AMP-histidine intermediate role is filled by histidine 319.

This sequence belongs to the RNA 3'-terminal cyclase family. Type 1 subfamily.

Its subcellular location is the cytoplasm. The catalysed reaction is a 3'-end 3'-phospho-ribonucleotide-RNA + ATP = a 3'-end 2',3'-cyclophospho-ribonucleotide-RNA + AMP + diphosphate. In terms of biological role, catalyzes the conversion of 3'-phosphate to a 2',3'-cyclic phosphodiester at the end of RNA. The mechanism of action of the enzyme occurs in 3 steps: (A) adenylation of the enzyme by ATP; (B) transfer of adenylate to an RNA-N3'P to produce RNA-N3'PP5'A; (C) and attack of the adjacent 2'-hydroxyl on the 3'-phosphorus in the diester linkage to produce the cyclic end product. The biological role of this enzyme is unknown but it is likely to function in some aspects of cellular RNA processing. This chain is RNA 3'-terminal phosphate cyclase, found in Staphylothermus marinus (strain ATCC 43588 / DSM 3639 / JCM 9404 / F1).